The primary structure comprises 632 residues: POU domain, class 2, transcription factor 1 (632 aa).

2 positions are modified to phosphothreonine: Thr157 and Thr163. The POU-specific domain occupies 167–241; sequence EEPSDLEELE…LLEKWLNDAE (75 aa). Phosphoserine is present on Ser170. Positions 243-258 are enriched in low complexity; that stretch reads LSSDSTASSPSALNSP. The tract at residues 243 to 273 is disordered; sequence LSSDSTASSPSALNSPGLGAEGLNRRRKKRT. Residues 268 to 327 constitute a DNA-binding region (homeobox); that stretch reads RRKKRTSIETNIRVALEKSFMENQKPTSEDITLIAEQLNMEKEVIRVWFCNRRQKEKRIN. Residues Ser274 and Ser337 each carry the phosphoserine modification. The disordered stretch occupies residues 385–448; the sequence is GTTDSTSNNT…STPLPSPLGA (64 aa). The segment covering 394 to 441 has biased composition (low complexity); sequence TATVISTAPPASSAVTSPSLSPSPSASASTSEASSASETSTTQTTSTP.

This sequence belongs to the POU transcription factor family. Class-2 subfamily. In terms of assembly, interacts with POU2AF1; the interaction increases POU2F1 transactivation activity. Interacts with NR3C1, AR, PGR and HCFC1. In terms of processing, phosphorylated by PRKDC. As to expression, widely expressed.

The protein resides in the nucleus. In terms of biological role, transcription factor that binds to the octamer motif (5'-ATTTGCAT-3') and activates the promoters of the genes for some small nuclear RNAs (snRNA) and of genes such as those for histone H2B and immunoglobulins. Modulates transcription transactivation by NR3C1, AR and PGR. This chain is POU domain, class 2, transcription factor 1 (Pou2f1), found in Rattus norvegicus (Rat).